A 60-amino-acid polypeptide reads, in one-letter code: Large ribosomal subunit protein uL30 (60 aa).

It belongs to the universal ribosomal protein uL30 family. As to quaternary structure, part of the 50S ribosomal subunit.

In Amoebophilus asiaticus (strain 5a2), this protein is Large ribosomal subunit protein uL30.